Consider the following 210-residue polypeptide: Urease accessory protein UreE (210 aa).

A disordered region spans residues 144–210 (PEGGAYAAGG…GHAHPHSLAR (67 aa)). Basic and acidic residues predominate over residues 156 to 202 (HGHDHPHHDHGHDHAHAHAHGTEACDHEHSHDHDCGHHHDHGQDYGH).

This sequence belongs to the UreE family.

The protein localises to the cytoplasm. Involved in urease metallocenter assembly. Binds nickel. Probably functions as a nickel donor during metallocenter assembly. This Paracidovorax citrulli (strain AAC00-1) (Acidovorax citrulli) protein is Urease accessory protein UreE.